Here is a 497-residue protein sequence, read N- to C-terminus: Glycerol kinase (497 aa).

Threonine 21 is an ADP binding site. ATP contacts are provided by threonine 21 and threonine 22. Residue threonine 21 participates in sn-glycerol 3-phosphate binding. Residue arginine 25 participates in ADP binding. Positions 88, 89, 140, and 244 each coordinate sn-glycerol 3-phosphate. Residues arginine 88, glutamate 89, tyrosine 140, aspartate 244, and glutamine 245 each contribute to the glycerol site. Positions 266 and 309 each coordinate ADP. ATP-binding residues include threonine 266, glycine 309, glutamine 313, and glycine 410. ADP-binding residues include glycine 410 and asparagine 414.

The protein belongs to the FGGY kinase family.

The enzyme catalyses glycerol + ATP = sn-glycerol 3-phosphate + ADP + H(+). It participates in polyol metabolism; glycerol degradation via glycerol kinase pathway; sn-glycerol 3-phosphate from glycerol: step 1/1. Inhibited by fructose 1,6-bisphosphate (FBP). Key enzyme in the regulation of glycerol uptake and metabolism. Catalyzes the phosphorylation of glycerol to yield sn-glycerol 3-phosphate. The sequence is that of Glycerol kinase from Gloeobacter violaceus (strain ATCC 29082 / PCC 7421).